A 148-amino-acid chain; its full sequence is Wheatwin-2 (148 aa).

The N-terminal stretch at 1–23 is a signal peptide; sequence MTMAARLMLVAALLCAAAAAATA. Gln-24 carries the pyrrolidone carboxylic acid modification. One can recognise a Barwin domain in the interval 24–148; the sequence is QQATNVRATY…VNYQFVDCRD (125 aa). 3 cysteine pairs are disulfide-bonded: Cys-54/Cys-86, Cys-75/Cys-109, and Cys-89/Cys-146.

As to quaternary structure, monomer.

Shows antifungal activity towards B.cinerea and towards the wheat-specific pathogenic fungi F.culmorum and F.graminearum (groups 1 and 2). The sequence is that of Wheatwin-2 (PR4B) from Triticum aestivum (Wheat).